The primary structure comprises 344 residues: Biotin synthase (344 aa).

Positions 40–267 constitute a Radical SAM core domain; sequence AEVQVSTLLS…KSMVRLSAGR (228 aa). [4Fe-4S] cluster is bound by residues Cys-55, Cys-59, and Cys-62. 4 residues coordinate [2Fe-2S] cluster: Cys-99, Cys-130, Cys-190, and Arg-262.

It belongs to the radical SAM superfamily. Biotin synthase family. In terms of assembly, homodimer. It depends on [4Fe-4S] cluster as a cofactor. [2Fe-2S] cluster is required as a cofactor.

The catalysed reaction is (4R,5S)-dethiobiotin + (sulfur carrier)-SH + 2 reduced [2Fe-2S]-[ferredoxin] + 2 S-adenosyl-L-methionine = (sulfur carrier)-H + biotin + 2 5'-deoxyadenosine + 2 L-methionine + 2 oxidized [2Fe-2S]-[ferredoxin]. Its pathway is cofactor biosynthesis; biotin biosynthesis; biotin from 7,8-diaminononanoate: step 2/2. In terms of biological role, catalyzes the conversion of dethiobiotin (DTB) to biotin by the insertion of a sulfur atom into dethiobiotin via a radical-based mechanism. This Xanthomonas oryzae pv. oryzae (strain PXO99A) protein is Biotin synthase.